The following is a 762-amino-acid chain: 5-methyltetrahydropteroyltriglutamate--homocysteine methyltransferase (762 aa).

Residues 17 to 20 and lysine 111 each bind 5-methyltetrahydropteroyltri-L-glutamate; that span reads REWK. L-homocysteine contacts are provided by residues 435–437 and glutamate 488; that span reads IGS. Residues 435 to 437 and glutamate 488 each bind L-methionine; that span reads IGS. Residues 519 to 520 and tryptophan 565 each bind 5-methyltetrahydropteroyltri-L-glutamate; that span reads RC. L-homocysteine is bound at residue aspartate 603. L-methionine is bound at residue aspartate 603. A 5-methyltetrahydropteroyltri-L-glutamate-binding site is contributed by glutamate 609. Positions 645, 647, and 669 each coordinate Zn(2+). Histidine 698 (proton donor) is an active-site residue. Position 730 (cysteine 730) interacts with Zn(2+).

The protein belongs to the vitamin-B12 independent methionine synthase family. Zn(2+) is required as a cofactor.

The catalysed reaction is 5-methyltetrahydropteroyltri-L-glutamate + L-homocysteine = tetrahydropteroyltri-L-glutamate + L-methionine. Its pathway is amino-acid biosynthesis; L-methionine biosynthesis via de novo pathway; L-methionine from L-homocysteine (MetE route): step 1/1. Its function is as follows. Catalyzes the transfer of a methyl group from 5-methyltetrahydrofolate to homocysteine resulting in methionine formation. The protein is 5-methyltetrahydropteroyltriglutamate--homocysteine methyltransferase of Bacillus thuringiensis subsp. konkukian (strain 97-27).